The sequence spans 911 residues: Protein translocase subunit SecA (911 aa).

ATP contacts are provided by residues Q87, 105 to 109, and D512; that span reads GEGKT. The disordered stretch occupies residues 865–892; that stretch reads AAEQDGAEEGAVATATAPVRSENKVGRN. Over residues 873 to 883 the composition is skewed to low complexity; sequence EGAVATATAPV. Residues C895, C897, C906, and H907 each contribute to the Zn(2+) site.

It belongs to the SecA family. Monomer and homodimer. Part of the essential Sec protein translocation apparatus which comprises SecA, SecYEG and auxiliary proteins SecDF-YajC and YidC. Requires Zn(2+) as cofactor.

The protein localises to the cell inner membrane. Its subcellular location is the cytoplasm. It catalyses the reaction ATP + H2O + cellular proteinSide 1 = ADP + phosphate + cellular proteinSide 2.. Functionally, part of the Sec protein translocase complex. Interacts with the SecYEG preprotein conducting channel. Has a central role in coupling the hydrolysis of ATP to the transfer of proteins into and across the cell membrane, serving both as a receptor for the preprotein-SecB complex and as an ATP-driven molecular motor driving the stepwise translocation of polypeptide chains across the membrane. This Ectopseudomonas mendocina (strain ymp) (Pseudomonas mendocina) protein is Protein translocase subunit SecA.